The following is a 396-amino-acid chain: Glutamyl-tRNA reductase (396 aa).

Substrate-binding positions include Thr45 to Arg48, Ser101, Glu106 to Gln108, and Gln112. The Nucleophile role is filled by Cys46. Position 177-182 (Gly177–Gly182) interacts with NADP(+).

Belongs to the glutamyl-tRNA reductase family. As to quaternary structure, homodimer.

It carries out the reaction (S)-4-amino-5-oxopentanoate + tRNA(Glu) + NADP(+) = L-glutamyl-tRNA(Glu) + NADPH + H(+). The protein operates within porphyrin-containing compound metabolism; protoporphyrin-IX biosynthesis; 5-aminolevulinate from L-glutamyl-tRNA(Glu): step 1/2. Functionally, catalyzes the NADPH-dependent reduction of glutamyl-tRNA(Glu) to glutamate 1-semialdehyde (GSA). The sequence is that of Glutamyl-tRNA reductase from Clostridium acetobutylicum (strain ATCC 824 / DSM 792 / JCM 1419 / IAM 19013 / LMG 5710 / NBRC 13948 / NRRL B-527 / VKM B-1787 / 2291 / W).